Here is a 115-residue protein sequence, read N- to C-terminus: Hydrogenase maturation factor HypA (115 aa).

Histidine 2 is a binding site for Ni(2+). Cysteine 73, cysteine 76, cysteine 89, and cysteine 92 together coordinate Zn(2+).

Belongs to the HypA/HybF family.

In terms of biological role, involved in the maturation of [NiFe] hydrogenases. Required for nickel insertion into the metal center of the hydrogenase. The polypeptide is Hydrogenase maturation factor HypA (Parabacteroides distasonis (strain ATCC 8503 / DSM 20701 / CIP 104284 / JCM 5825 / NCTC 11152)).